Reading from the N-terminus, the 307-residue chain is Aspartate carbamoyltransferase catalytic subunit (307 aa).

Residues Arg-58 and Thr-59 each coordinate carbamoyl phosphate. Lys-86 is an L-aspartate binding site. 3 residues coordinate carbamoyl phosphate: Arg-108, His-138, and Gln-141. Residues Arg-171 and Arg-223 each contribute to the L-aspartate site. Residues Ala-264 and Pro-265 each coordinate carbamoyl phosphate.

This sequence belongs to the aspartate/ornithine carbamoyltransferase superfamily. ATCase family. As to quaternary structure, heterododecamer (2C3:3R2) of six catalytic PyrB chains organized as two trimers (C3), and six regulatory PyrI chains organized as three dimers (R2).

The enzyme catalyses carbamoyl phosphate + L-aspartate = N-carbamoyl-L-aspartate + phosphate + H(+). The protein operates within pyrimidine metabolism; UMP biosynthesis via de novo pathway; (S)-dihydroorotate from bicarbonate: step 2/3. Its function is as follows. Catalyzes the condensation of carbamoyl phosphate and aspartate to form carbamoyl aspartate and inorganic phosphate, the committed step in the de novo pyrimidine nucleotide biosynthesis pathway. The chain is Aspartate carbamoyltransferase catalytic subunit from Streptococcus suis (strain 98HAH33).